A 457-amino-acid chain; its full sequence is Bifunctional protein GlmU (457 aa).

Residues 1 to 236 (MDQDACTHSA…DWHFLGVNTP (236 aa)) form a pyrophosphorylase region. Residues 14 to 17 (LAAG), Lys-28, Gln-79, and 84 to 85 (GT) each bind UDP-N-acetyl-alpha-D-glucosamine. Asp-110 provides a ligand contact to Mg(2+). The UDP-N-acetyl-alpha-D-glucosamine site is built by Gly-145, Glu-159, Asn-176, and Asn-234. Asn-234 is a Mg(2+) binding site. The tract at residues 237–257 (KDLSYVESIQQAFIIEKLLQS) is linker. Residues 258–457 (GVIIHSPESV…GKQKNFSKRK (200 aa)) are N-acetyltransferase. Residues Arg-340 and Lys-358 each contribute to the UDP-N-acetyl-alpha-D-glucosamine site. The active-site Proton acceptor is the His-370. Residues Tyr-373 and Asn-384 each coordinate UDP-N-acetyl-alpha-D-glucosamine. Acetyl-CoA contacts are provided by residues Ala-387, 393 to 394 (NY), Ser-412, Ala-430, and Arg-447.

This sequence in the N-terminal section; belongs to the N-acetylglucosamine-1-phosphate uridyltransferase family. The protein in the C-terminal section; belongs to the transferase hexapeptide repeat family. Homotrimer. Mg(2+) serves as cofactor.

The protein resides in the cytoplasm. The enzyme catalyses alpha-D-glucosamine 1-phosphate + acetyl-CoA = N-acetyl-alpha-D-glucosamine 1-phosphate + CoA + H(+). It catalyses the reaction N-acetyl-alpha-D-glucosamine 1-phosphate + UTP + H(+) = UDP-N-acetyl-alpha-D-glucosamine + diphosphate. It participates in nucleotide-sugar biosynthesis; UDP-N-acetyl-alpha-D-glucosamine biosynthesis; N-acetyl-alpha-D-glucosamine 1-phosphate from alpha-D-glucosamine 6-phosphate (route II): step 2/2. The protein operates within nucleotide-sugar biosynthesis; UDP-N-acetyl-alpha-D-glucosamine biosynthesis; UDP-N-acetyl-alpha-D-glucosamine from N-acetyl-alpha-D-glucosamine 1-phosphate: step 1/1. It functions in the pathway bacterial outer membrane biogenesis; LPS lipid A biosynthesis. In terms of biological role, catalyzes the last two sequential reactions in the de novo biosynthetic pathway for UDP-N-acetylglucosamine (UDP-GlcNAc). The C-terminal domain catalyzes the transfer of acetyl group from acetyl coenzyme A to glucosamine-1-phosphate (GlcN-1-P) to produce N-acetylglucosamine-1-phosphate (GlcNAc-1-P), which is converted into UDP-GlcNAc by the transfer of uridine 5-monophosphate (from uridine 5-triphosphate), a reaction catalyzed by the N-terminal domain. The protein is Bifunctional protein GlmU of Lawsonia intracellularis (strain PHE/MN1-00).